A 39-amino-acid polypeptide reads, in one-letter code: Photosystem II reaction center protein L (39 aa).

A helical transmembrane segment spans residues 18–38 (SLYWGLLLIFVLAVLFSNYFF).

The protein belongs to the PsbL family. PSII is composed of 1 copy each of membrane proteins PsbA, PsbB, PsbC, PsbD, PsbE, PsbF, PsbH, PsbI, PsbJ, PsbK, PsbL, PsbM, PsbT, PsbX, PsbY, PsbZ, Psb30/Ycf12, at least 3 peripheral proteins of the oxygen-evolving complex and a large number of cofactors. It forms dimeric complexes.

Its subcellular location is the plastid thylakoid membrane. Its function is as follows. One of the components of the core complex of photosystem II (PSII). PSII is a light-driven water:plastoquinone oxidoreductase that uses light energy to abstract electrons from H(2)O, generating O(2) and a proton gradient subsequently used for ATP formation. It consists of a core antenna complex that captures photons, and an electron transfer chain that converts photonic excitation into a charge separation. This subunit is found at the monomer-monomer interface and is required for correct PSII assembly and/or dimerization. This is Photosystem II reaction center protein L from Cuscuta gronovii (Common dodder).